A 248-amino-acid chain; its full sequence is DNA repair protein RecO (248 aa).

Belongs to the RecO family.

Its function is as follows. Involved in DNA repair and RecF pathway recombination. The sequence is that of DNA repair protein RecO from Oleidesulfovibrio alaskensis (strain ATCC BAA-1058 / DSM 17464 / G20) (Desulfovibrio alaskensis).